Reading from the N-terminus, the 156-residue chain is Probable succinate transporter subunit YjjB (156 aa).

Helical transmembrane passes span 7-27 (WALL…AMVF), 54-74 (FGMD…MIGI), 86-106 (VFTV…TAMI), and 128-148 (FLKA…PGLW).

This sequence belongs to the ThrE exporter (TC 2.A.79) family. As to quaternary structure, the transporter is composed of YjjB and YjjP.

Its subcellular location is the cell inner membrane. In terms of biological role, involved in succinate export with YjjP. Both proteins are required for export. This Yersinia enterocolitica serotype O:8 / biotype 1B (strain NCTC 13174 / 8081) protein is Probable succinate transporter subunit YjjB.